Reading from the N-terminus, the 800-residue chain is DNA topoisomerase 4 subunit A (800 aa).

The 465-residue stretch at leucine 31 to glutamate 495 folds into the Topo IIA-type catalytic domain. The active-site O-(5'-phospho-DNA)-tyrosine intermediate is tyrosine 119.

Belongs to the type II topoisomerase GyrA/ParC subunit family. ParC type 2 subfamily. As to quaternary structure, heterotetramer composed of ParC and ParE.

The protein localises to the cell membrane. The catalysed reaction is ATP-dependent breakage, passage and rejoining of double-stranded DNA.. Topoisomerase IV is essential for chromosome segregation. It relaxes supercoiled DNA. Performs the decatenation events required during the replication of a circular DNA molecule. The polypeptide is DNA topoisomerase 4 subunit A (Staphylococcus aureus (strain NCTC 8325 / PS 47)).